Reading from the N-terminus, the 361-residue chain is MCETASRTLPPGIEPISGDEARRLIHHTSGPELEALLDRAEAVRRAVHGDEVALCGITNAKSGRCPEDCGFCSQSARFEGADAPVYPMIGAGEIVEQARKAERAGAREFSIVASGTRLSREQELATVEDALRRLRAETAVEPCASLGLMREPELRRLKDAGLMHYHHNLETARSHFENVCTTHTFDEQLETIRAAKGLGLKLCSGGILGMGETPEQRVEFAEEVRDLGVDCVPVNFLNPRAGTPMEHLKAITPEECLAALAVFRLMMPAAHIFVMGGREVNLGDRQHLIFRAGANGTMVGNYLTSAGRAPDLTVGMVERQGLTLRPPDTGKAWAFDGHAPSDADWNRKAAEPRPRALPVVR.

The Radical SAM core domain maps to 47–278 (VHGDEVALCG…AAHIFVMGGR (232 aa)). Residues Cys-65, Cys-69, and Cys-72 each coordinate [4Fe-4S] cluster. Residues Ser-110, Cys-143, and Cys-203 each contribute to the [2Fe-2S] cluster site.

This sequence belongs to the radical SAM superfamily. Biotin synthase family. Homodimer. [4Fe-4S] cluster serves as cofactor. Requires [2Fe-2S] cluster as cofactor.

It carries out the reaction (4R,5S)-dethiobiotin + (sulfur carrier)-SH + 2 reduced [2Fe-2S]-[ferredoxin] + 2 S-adenosyl-L-methionine = (sulfur carrier)-H + biotin + 2 5'-deoxyadenosine + 2 L-methionine + 2 oxidized [2Fe-2S]-[ferredoxin]. The protein operates within cofactor biosynthesis; biotin biosynthesis; biotin from 7,8-diaminononanoate: step 2/2. Its function is as follows. Catalyzes the conversion of dethiobiotin (DTB) to biotin by the insertion of a sulfur atom into dethiobiotin via a radical-based mechanism. The polypeptide is Biotin synthase (Anaeromyxobacter dehalogenans (strain 2CP-C)).